The sequence spans 161 residues: Phosphopantetheine adenylyltransferase (161 aa).

S9 is a substrate binding site. ATP is bound by residues 9–10 and H17; that span reads SF. Residues K41, T73, and R87 each contribute to the substrate site. ATP-binding positions include 88–90, E98, and 123–129; these read GLR and FAHISST.

This sequence belongs to the bacterial CoaD family. In terms of assembly, homohexamer. The cofactor is Mg(2+).

The protein resides in the cytoplasm. It carries out the reaction (R)-4'-phosphopantetheine + ATP + H(+) = 3'-dephospho-CoA + diphosphate. It functions in the pathway cofactor biosynthesis; coenzyme A biosynthesis; CoA from (R)-pantothenate: step 4/5. Its function is as follows. Reversibly transfers an adenylyl group from ATP to 4'-phosphopantetheine, yielding dephospho-CoA (dPCoA) and pyrophosphate. The protein is Phosphopantetheine adenylyltransferase of Chloroflexus aurantiacus (strain ATCC 29366 / DSM 635 / J-10-fl).